Consider the following 212-residue polypeptide: Thymidylate kinase (212 aa).

Residue 10–17 (GPDGAGKT) participates in ATP binding.

This sequence belongs to the thymidylate kinase family.

The catalysed reaction is dTMP + ATP = dTDP + ADP. Functionally, phosphorylation of dTMP to form dTDP in both de novo and salvage pathways of dTTP synthesis. This Enterococcus faecalis (strain ATCC 700802 / V583) protein is Thymidylate kinase.